A 201-amino-acid polypeptide reads, in one-letter code: dCTP deaminase, dUMP-forming (201 aa).

DCTP contacts are provided by residues lysine 101–arginine 106, aspartate 119, threonine 127–glutamate 129, glutamine 148, tyrosine 162, and glutamine 174. Glutamate 129 serves as the catalytic Proton donor/acceptor.

This sequence belongs to the dCTP deaminase family. As to quaternary structure, homotrimer.

The enzyme catalyses dCTP + 2 H2O = dUMP + NH4(+) + diphosphate. It participates in pyrimidine metabolism; dUMP biosynthesis; dUMP from dCTP: step 1/1. Its function is as follows. Bifunctional enzyme that catalyzes both the deamination of dCTP to dUTP and the hydrolysis of dUTP to dUMP without releasing the toxic dUTP intermediate. This Clavibacter michiganensis subsp. michiganensis (strain NCPPB 382) protein is dCTP deaminase, dUMP-forming.